A 151-amino-acid polypeptide reads, in one-letter code: Epigen (151 aa).

An N-terminal signal peptide occupies residues 1–18; it reads MAFGMLIYILLKAMGALS. The Extracellular portion of the chain corresponds to 19–108; the sequence is EEAALTASSL…NSYAHNSYER (90 aa). Asparagine 39 is a glycosylation site (N-linked (GlcNAc...) asparagine). Residues 54 to 94 enclose the EGF-like domain; sequence LMQTCLEEHHSYCINGLCAFHSELRKPICKCLAGYNGERCE. Disulfide bonds link cysteine 58–cysteine 71, cysteine 66–cysteine 82, and cysteine 84–cysteine 93. The chain crosses the membrane as a helical span at residues 109–129; the sequence is YIAVGIGIGILTSGILAIIYC. Residues 130–151 lie on the Cytoplasmic side of the membrane; that stretch reads YVRKRCRKLKSPYKVCMGETAL.

It is found in the membrane. Promotes the growth of epithelial cells. This chain is Epigen (EPGN), found in Gallus gallus (Chicken).